The chain runs to 156 residues: Transcription antitermination protein NusB (156 aa).

This sequence belongs to the NusB family.

In terms of biological role, involved in transcription antitermination. Required for transcription of ribosomal RNA (rRNA) genes. Binds specifically to the boxA antiterminator sequence of the ribosomal RNA (rrn) operons. In Mycolicibacterium paratuberculosis (strain ATCC BAA-968 / K-10) (Mycobacterium paratuberculosis), this protein is Transcription antitermination protein NusB.